A 446-amino-acid polypeptide reads, in one-letter code: Tubulin beta-3 chain (446 aa).

GTP contacts are provided by Gln11, Glu69, Ser138, Gly142, Thr143, Gly144, Asn204, and Asn226. Residue Glu69 coordinates Mg(2+). The disordered stretch occupies residues 421–446; sequence EYQQYQDATAEEEDYEEEEEDEEVAA. A compositionally biased stretch (acidic residues) spans 429-446; the sequence is TAEEEDYEEEEEDEEVAA.

Belongs to the tubulin family. As to quaternary structure, dimer of alpha and beta chains. A typical microtubule is a hollow water-filled tube with an outer diameter of 25 nm and an inner diameter of 15 nM. Alpha-beta heterodimers associate head-to-tail to form protofilaments running lengthwise along the microtubule wall with the beta-tubulin subunit facing the microtubule plus end conferring a structural polarity. Microtubules usually have 13 protofilaments but different protofilament numbers can be found in some organisms and specialized cells. Requires Mg(2+) as cofactor. In terms of tissue distribution, expressed in roots, second node, leaf sheaths, and suspension cultured cells.

It is found in the cytoplasm. The protein localises to the cytoskeleton. In terms of biological role, tubulin is the major constituent of microtubules, a cylinder consisting of laterally associated linear protofilaments composed of alpha- and beta-tubulin heterodimers. Microtubules grow by the addition of GTP-tubulin dimers to the microtubule end, where a stabilizing cap forms. Below the cap, tubulin dimers are in GDP-bound state, owing to GTPase activity of alpha-tubulin. The polypeptide is Tubulin beta-3 chain (TUBB3) (Oryza sativa subsp. japonica (Rice)).